Here is a 115-residue protein sequence, read N- to C-terminus: Ribonuclease P protein component (115 aa).

The protein belongs to the RnpA family. In terms of assembly, consists of a catalytic RNA component (M1 or rnpB) and a protein subunit.

It carries out the reaction Endonucleolytic cleavage of RNA, removing 5'-extranucleotides from tRNA precursor.. RNaseP catalyzes the removal of the 5'-leader sequence from pre-tRNA to produce the mature 5'-terminus. It can also cleave other RNA substrates such as 4.5S RNA. The protein component plays an auxiliary but essential role in vivo by binding to the 5'-leader sequence and broadening the substrate specificity of the ribozyme. In Staphylococcus aureus (strain Mu3 / ATCC 700698), this protein is Ribonuclease P protein component.